The following is a 168-amino-acid chain: Putative peroxiredoxin prxA (168 aa).

The 155-residue stretch at 4 to 158 (LKAGDSFPAD…LEPAKNHLEF (155 aa)) folds into the Thioredoxin domain. Catalysis depends on Cys-61, which acts as the Cysteine sulfenic acid (-SOH) intermediate.

It belongs to the peroxiredoxin family. Prx5 subfamily. Homodimer; disulfide-linked, upon oxidation. Interacts with thioredoxin trxA.

The catalysed reaction is a hydroperoxide + [thioredoxin]-dithiol = an alcohol + [thioredoxin]-disulfide + H2O. Thiol-specific peroxidase that catalyzes the reduction of hydrogen peroxide and organic hydroperoxides to water and alcohols, respectively. Plays a role in cell protection against oxidative stress by detoxifying peroxides and as sensor of hydrogen peroxide-mediated signaling events. Involved in osmoadaptation. This Emericella nidulans (strain FGSC A4 / ATCC 38163 / CBS 112.46 / NRRL 194 / M139) (Aspergillus nidulans) protein is Putative peroxiredoxin prxA.